Reading from the N-terminus, the 508-residue chain is Photosystem II CP47 reaction center protein (508 aa).

Transmembrane regions (helical) follow at residues Ser21–Ser36, Ile101–Trp115, Gly140–Phe156, Ile203–Ser218, Val237–Val252, and Ser457–Arg472.

It belongs to the PsbB/PsbC family. PsbB subfamily. PSII is composed of 1 copy each of membrane proteins PsbA, PsbB, PsbC, PsbD, PsbE, PsbF, PsbH, PsbI, PsbJ, PsbK, PsbL, PsbM, PsbT, PsbX, PsbY, PsbZ, Psb30/Ycf12, at least 3 peripheral proteins of the oxygen-evolving complex and a large number of cofactors. It forms dimeric complexes. Binds multiple chlorophylls. PSII binds additional chlorophylls, carotenoids and specific lipids. serves as cofactor.

Its subcellular location is the plastid. The protein resides in the chloroplast thylakoid membrane. One of the components of the core complex of photosystem II (PSII). It binds chlorophyll and helps catalyze the primary light-induced photochemical processes of PSII. PSII is a light-driven water:plastoquinone oxidoreductase, using light energy to abstract electrons from H(2)O, generating O(2) and a proton gradient subsequently used for ATP formation. The chain is Photosystem II CP47 reaction center protein from Pelargonium hortorum (Common geranium).